Consider the following 569-residue polypeptide: Serine/threonine-protein kinase gad8 (569 aa).

The segment at 19–63 is disordered; sequence GLNSGGSSFTRGLKNSTLSSTSSRKSSDEKSRKSSEDKRSPQSTV. Residues 31–42 are compositionally biased toward low complexity; it reads LKNSTLSSTSSR. Basic and acidic residues predominate over residues 43–58; the sequence is KSSDEKSRKSSEDKRS. A C2 domain is found at 45 to 202; it reads SDEKSRKSSE…IVNKLTDEWV (158 aa). In terms of domain architecture, Protein kinase spans 230-485; that stretch reads FELLKVVGKG…AQEIKNHPFF (256 aa). ATP is bound by residues 236–244 and lysine 259; that span reads VGKGSFGKV. Aspartate 353 (proton acceptor) is an active-site residue. Residue threonine 387 is modified to Phosphothreonine; by ksg1. Residues 486 to 557 form the AGC-kinase C-terminal domain; the sequence is DDIDWKKLCA…QRPTTIDTSD (72 aa). Phosphoserine; by TORC2 occurs at positions 527 and 546.

It belongs to the protein kinase superfamily. AGC Ser/Thr protein kinase family. Phosphorylated by ksg1 and target of rapamycin complex 2 (TORC2), affecting the kinase activity of gad8 in a nutrient-dependent manner.

The catalysed reaction is L-seryl-[protein] + ATP = O-phospho-L-seryl-[protein] + ADP + H(+). It carries out the reaction L-threonyl-[protein] + ATP = O-phospho-L-threonyl-[protein] + ADP + H(+). In terms of biological role, involved in a signaling module for sexual development and cell growth under stressed conditions. Required for G1 arrest under nitrogen starvation and for growth at high temperature and osmolarity. The protein is Serine/threonine-protein kinase gad8 of Schizosaccharomyces pombe (strain 972 / ATCC 24843) (Fission yeast).